The sequence spans 451 residues: Tetraspanin-14 (451 aa).

Topologically, residues 1–56 (MPHRAPRRFMKTAPGACDWEQCLLMGSGEPTRARAVVSSSHKQRKPRQEISACLKW) are cytoplasmic. A Basolateral membrane targeting motif is present at residues 20–24 (EQCLL). The chain crosses the membrane as a helical span at residues 57 to 77 (LVFLLNSIVFLVGVGILALGV). Topologically, residues 78-96 (YLFIKDFREVKLVDIILNP) are extracellular. Residues 97 to 117 (AILISIFGFSICVVSFFGFMG) traverse the membrane as a helical segment. Residues 118 to 130 (ALRDNIFLLKCFA) are Cytoplasmic-facing. A helical membrane pass occupies residues 131–151 (ACVFLSYILVVAVTLVFFTLF). Topologically, residues 152–285 (YTDTTEGLSA…QPLRTLFESH (134 aa)) are extracellular. 2 N-linked (GlcNAc...) asparagine glycosylation sites follow: N205 and N211. Residues 286 to 306 (AVHVGAFVALLIVPVCISVCL) traverse the membrane as a helical segment. Residues 307–451 (TNILAKQVDH…TDLVPQKSKS (145 aa)) are Cytoplasmic-facing. The disordered stretch occupies residues 328–451 (NDRRRKRDHN…TDLVPQKSKS (124 aa)). Residues 366-376 (PDIPPPLPPIE) are compositionally biased toward pro residues. Positions 410-434 (ATTTRTPPAAAGPAPTPQATTTNRT) are enriched in low complexity. Positions 435-444 (HQWVLQQTDL) are enriched in polar residues.

It belongs to the tetraspanin (TM4SF) family. In terms of tissue distribution, expressed in the germline, particularly in sperm cells. Expressed in the germline (particularly in sperm cells), anterior sensory cilia, hypodermis and vulva (at protein level). As to expression, expressed in the pharynx, hypodermis and vulva (at protein level).

Its subcellular location is the cell membrane. The protein localises to the cytoplasmic vesicle membrane. The protein resides in the endosome membrane. It is found in the early endosome membrane. It localises to the late endosome membrane. Its subcellular location is the recycling endosome membrane. The protein localises to the apical cell membrane. The protein resides in the basolateral cell membrane. Functions redundantly with tsp-12 to regulate cell surface levels of the BMP type II receptor daf-4 (but not BMP type I receptor sma-6), probably by regulating endosomal sorting and recycling of receptors, preventing their targeting to degradative lysosomes. Together with tsp-12, regulates cell fate specification in the postembryonic mesodermal M lineage, body size, male development and vulva development, probably by positively modulating BMP-like Sma/Mab signaling. Together with tsp-12 involved in maintaining the structural and functional integrity of the endosomal network. Together with tsp-12, probably acts by modulating the activation of glp-1, Notch-like receptor, to regulate germline maturation. Its function is as follows. Functions redundantly with tsp-12 to regulate cell fate specification in the postembryonic mesodermal M lineage, body size, embryonic and vulva development. Functionally, functions redundantly with tsp-12 to regulate cell fate specification in the postembryonic mesodermal M lineage. Likely plays a complementary role in mesodermal development with tsp-14 isoform a, but may be more critical. This is Tetraspanin-14 from Caenorhabditis elegans.